The sequence spans 242 residues: Pyridoxine 5'-phosphate synthase (242 aa).

N8 serves as a coordination point for 3-amino-2-oxopropyl phosphate. 1-deoxy-D-xylulose 5-phosphate is bound at residue D10–H11. R19 contacts 3-amino-2-oxopropyl phosphate. Catalysis depends on H44, which acts as the Proton acceptor. 1-deoxy-D-xylulose 5-phosphate contacts are provided by R46 and H51. E71 serves as the catalytic Proton acceptor. Position 101 (T101) interacts with 1-deoxy-D-xylulose 5-phosphate. Catalysis depends on H193, which acts as the Proton donor. 3-amino-2-oxopropyl phosphate-binding positions include G194 and G215–F216.

The protein belongs to the PNP synthase family. As to quaternary structure, homooctamer; tetramer of dimers.

It localises to the cytoplasm. It carries out the reaction 3-amino-2-oxopropyl phosphate + 1-deoxy-D-xylulose 5-phosphate = pyridoxine 5'-phosphate + phosphate + 2 H2O + H(+). Its pathway is cofactor biosynthesis; pyridoxine 5'-phosphate biosynthesis; pyridoxine 5'-phosphate from D-erythrose 4-phosphate: step 5/5. Catalyzes the complicated ring closure reaction between the two acyclic compounds 1-deoxy-D-xylulose-5-phosphate (DXP) and 3-amino-2-oxopropyl phosphate (1-amino-acetone-3-phosphate or AAP) to form pyridoxine 5'-phosphate (PNP) and inorganic phosphate. The sequence is that of Pyridoxine 5'-phosphate synthase from Elusimicrobium minutum (strain Pei191).